The sequence spans 201 residues: Recombination protein RecR (201 aa).

The segment at 60 to 75 (CRRCGNVDVCDPCTIC) adopts a C4-type zinc-finger fold. The region spanning 83–178 (RTLVVVADVG…RVTRLAQGVP (96 aa)) is the Toprim domain.

It belongs to the RecR family.

May play a role in DNA repair. It seems to be involved in an RecBC-independent recombinational process of DNA repair. It may act with RecF and RecO. The chain is Recombination protein RecR from Xanthobacter autotrophicus (strain ATCC BAA-1158 / Py2).